The following is a 66-amino-acid chain: Large ribosomal subunit protein bL35 (66 aa).

Basic residues-rich tracts occupy residues Met-1 to Arg-16 and His-31 to Arg-45. A disordered region spans residues Met-1–Ala-52.

The protein belongs to the bacterial ribosomal protein bL35 family.

The sequence is that of Large ribosomal subunit protein bL35 from Ligilactobacillus salivarius (strain UCC118) (Lactobacillus salivarius).